The sequence spans 227 residues: Cytidylate kinase (227 aa).

10-18 (GPASSGKST) is a binding site for ATP.

Belongs to the cytidylate kinase family. Type 1 subfamily.

The protein resides in the cytoplasm. The enzyme catalyses CMP + ATP = CDP + ADP. It carries out the reaction dCMP + ATP = dCDP + ADP. This is Cytidylate kinase from Streptococcus agalactiae serotype V (strain ATCC BAA-611 / 2603 V/R).